The sequence spans 103 residues: Large ribosomal subunit protein uL24 (103 aa).

Belongs to the universal ribosomal protein uL24 family. In terms of assembly, part of the 50S ribosomal subunit.

In terms of biological role, one of two assembly initiator proteins, it binds directly to the 5'-end of the 23S rRNA, where it nucleates assembly of the 50S subunit. Functionally, one of the proteins that surrounds the polypeptide exit tunnel on the outside of the subunit. The protein is Large ribosomal subunit protein uL24 of Christiangramia forsetii (strain DSM 17595 / CGMCC 1.15422 / KT0803) (Gramella forsetii).